The sequence spans 262 residues: Global transcriptional regulator CodY (262 aa).

The tract at residues 1–159 (MAHLLEKTRK…ASTVVGIQLL (159 aa)) is GAF domain. A DNA-binding region (H-T-H motif) is located at residues 207–226 (ASVIADRIGITRSVIVNALR).

The protein belongs to the CodY family.

Its subcellular location is the cytoplasm. Functionally, DNA-binding global transcriptional regulator which is involved in the adaptive response to starvation and acts by directly or indirectly controlling the expression of numerous genes in response to nutrient availability. During rapid exponential growth, CodY is highly active and represses genes whose products allow adaptation to nutrient depletion. The polypeptide is Global transcriptional regulator CodY (Streptococcus pneumoniae (strain JJA)).